Consider the following 392-residue polypeptide: Trans-2-enoyl-CoA reductase [NADH] (392 aa).

Residues 74 to 75 (FE), 111 to 112 (DA), and 141 to 142 (LA) each bind NAD(+). Tyrosine 227 contacts substrate. Tyrosine 237 functions as the Proton donor in the catalytic mechanism. Residues lysine 246 and 276–278 (VVT) contribute to the NAD(+) site.

It belongs to the TER reductase family. As to quaternary structure, monomer.

It carries out the reaction a 2,3-saturated acyl-CoA + NAD(+) = a (2E)-enoyl-CoA + NADH + H(+). It functions in the pathway lipid metabolism; fatty acid biosynthesis. Functionally, involved in the fatty acid synthesis (FAS II). Catalyzes the reduction of a carbon-carbon double bond in an enoyl moiety that is covalently linked to a coenzyme A (CoA). The protein is Trans-2-enoyl-CoA reductase [NADH] of Brachyspira hyodysenteriae (strain ATCC 49526 / WA1).